Reading from the N-terminus, the 141-residue chain is Nucleoside diphosphate kinase (141 aa).

The ATP site is built by Lys11, Phe59, Arg87, Thr93, Arg104, and Asn114. Catalysis depends on His117, which acts as the Pros-phosphohistidine intermediate.

It belongs to the NDK family. In terms of assembly, homotetramer. The cofactor is Mg(2+).

The protein localises to the cytoplasm. It catalyses the reaction a 2'-deoxyribonucleoside 5'-diphosphate + ATP = a 2'-deoxyribonucleoside 5'-triphosphate + ADP. The catalysed reaction is a ribonucleoside 5'-diphosphate + ATP = a ribonucleoside 5'-triphosphate + ADP. In terms of biological role, major role in the synthesis of nucleoside triphosphates other than ATP. The ATP gamma phosphate is transferred to the NDP beta phosphate via a ping-pong mechanism, using a phosphorylated active-site intermediate. This chain is Nucleoside diphosphate kinase, found in Nitrosospira multiformis (strain ATCC 25196 / NCIMB 11849 / C 71).